Consider the following 102-residue polypeptide: Large ribosomal subunit protein mL63 (102 aa).

This sequence belongs to the mitochondrion-specific ribosomal protein mL63 family.

Its subcellular location is the mitochondrion. The polypeptide is Large ribosomal subunit protein mL63 (Mrpl57) (Mus musculus (Mouse)).